The sequence spans 179 residues: Signal peptidase complex catalytic subunit SEC11A (179 aa).

Topologically, residues 1–16 (MLSLDFLDDVRRMNKR) are cytoplasmic. A helical; Signal-anchor for type II membrane protein transmembrane segment spans residues 17-36 (QLYYQVLNFGMIVSSALMIW). The Lumenal portion of the chain corresponds to 37 to 179 (KGLMVITGSE…LGLFVLVHRE (143 aa)). Active-site charge relay system residues include Ser-56, His-96, and Asp-122. Residues 165–176 (AVLFLLGLFVLV) are C-terminal short (CTS) helix.

The protein belongs to the peptidase S26B family. Component of the signal peptidase complex paralog A (SPC-A) composed of a catalytic subunit SEC11A and three accessory subunits SPCS1, SPCS2 and SPCS3. Within the complex, interacts with SPCS2 and SPCS3. The complex induces a local thinning of the ER membrane which is used to measure the length of the signal peptide (SP) h-region of protein substrates. This ensures the selectivity of the complex towards h-regions shorter than 18-20 amino acids.

The protein localises to the endoplasmic reticulum membrane. It carries out the reaction Cleavage of hydrophobic, N-terminal signal or leader sequences from secreted and periplasmic proteins.. Catalytic component of the signal peptidase complex (SPC) which catalyzes the cleavage of N-terminal signal sequences from nascent proteins as they are translocated into the lumen of the endoplasmic reticulum. Specifically cleaves N-terminal signal peptides that contain a hydrophobic alpha-helix (h-region) shorter than 18-20 amino acids. This Bos taurus (Bovine) protein is Signal peptidase complex catalytic subunit SEC11A (SEC11A).